Here is a 767-residue protein sequence, read N- to C-terminus: Cullin-1 (767 aa).

Residues 699 to 760 (DRKLLLQSAI…EKEYLERQGR (62 aa)) enclose the Cullin neddylation domain. Lys-713 is covalently cross-linked (Glycyl lysine isopeptide (Lys-Gly) (interchain with G-Cter in NEDD8)).

It belongs to the cullin family. As to quaternary structure, component of multiple Cul1-RING E3 ubiquitin-protein ligase complexes commonly known as SCF (SKP1-CUL1-F-box) complexes, consisting of cul1, skp1, pip1 and a variable F-box domain-containing protein as substrate-specific subunit. Binds to the pop1 homodimer, the pop2 homodimer and the pop1/pop2 heterodimer forming the SCF(pop1-pop2) complex. Interacts with pof3, pof14 and skp1. Neddylated; enhancing the ubiquitin-ligase activity.

The protein resides in the cytoplasm. Its pathway is protein modification; protein ubiquitination. Its function is as follows. Core component of multiple cullin-RING-based SCF (SKP1-CUL1-F-box protein) E3 ubiquitin-protein ligase complexes, which mediate the ubiquitination of target proteins. The functional specificity of the SCF complex depends on the F-box protein as substrate recognition component. SCF(pop1-pop2) is required for the maintenance of ploidy and directs ubiquitination of cig2. The chain is Cullin-1 (cul1) from Schizosaccharomyces pombe (strain 972 / ATCC 24843) (Fission yeast).